We begin with the raw amino-acid sequence, 234 residues long: Ammonia monooxygenase gamma subunit (234 aa).

An N-terminal signal peptide occupies residues 1 to 20 (MRMIKFLLLAILLAPFVAHS). One can recognise a Cytochrome c domain in the interval 38-193 (ESLQRGAKGF…RFVADLVNYM (156 aa)). Residues cysteine 51, cysteine 54, and histidine 55 each coordinate heme c. The chain crosses the membrane as a helical span at residues 206–226 (ELGITVLLFLFGMLGLTYLLK).

It belongs to the cytochrome c family. In terms of assembly, the soluble ammonia monooxygenase is a nonamer composed of three alpha subunits (AmoA), three beta subunits (AmoB) and three gamma subunits (Cytochrome c1 PetC). Requires heme c as cofactor.

The protein resides in the cell membrane. Its subcellular location is the cytoplasm. Functionally, part of the ammonia monooxygenase complex, which catalyzes the oxidation of ammonia to hydroxylamine, the first reaction in the process of ammonia oxidation to nitrite. The protein is Ammonia monooxygenase gamma subunit of Nitrosomonas europaea (strain ATCC 19718 / CIP 103999 / KCTC 2705 / NBRC 14298).